The following is an 852-amino-acid chain: Transient receptor potential cation channel subfamily V member 4 (852 aa).

Residues 1 to 455 lie on the Cytoplasmic side of the membrane; it reads MADPEDPRDA…RDKWRKFGAV (455 aa). The interval 30–51 is disordered; it reads VEDTPSPAEPSRGPPGAVDGKQ. ATP is bound by residues K178, K183, N187, 222–225, and R234; that span reads YRGQ. 2 ANK repeats span residues 223–252 and 270–299; these read RGQT…DVHA and FGEL…KQAD. A 1,2-diacyl-sn-glycero-3-phospho-(1D-myo-inositol-4,5-bisphosphate) is bound by residues 235–237, 282–285, and K330; these read RCK and NQPH. An ANK 3 repeat occupies 355 to 387; that stretch reads DGLSPLMMAAKTGKIGIFQHIIRREIADEDVRH. A helical membrane pass occupies residues 456–476; that stretch reads SFYISVVSYLCAMIIFTLIAY. The Extracellular portion of the chain corresponds to 477-493; sequence YRPMEGPPPYPYTTTID. The helical transmembrane segment at 494-520 threads the bilayer; sequence YLRLAGEIITLLTGILFFFSNIKDLFM. Residues 521–533 lie on the Cytoplasmic side of the membrane; the sequence is KKCPGVNSFFIDG. A helical membrane pass occupies residues 534–554; the sequence is SFQLLYFIYSVLVIVTAGLYL. Residues 555-558 lie on the Extracellular side of the membrane; sequence GGVE. Residues 559–579 traverse the membrane as a helical segment; the sequence is AYLAVMVFALVLGWMNALYFT. Residues 580–594 lie on the Cytoplasmic side of the membrane; the sequence is RGLKLTGTYSIMIQK. The helical transmembrane segment at 595 to 622 threads the bilayer; that stretch reads ILFKDLFRFLLVYLLFMIGYASALVSLL. Residues 623 to 651 lie on the Extracellular side of the membrane; the sequence is NPCPSSESCSEDHSNCTLPTYPSCRDSQT. The pore-forming intramembrane region spans 652 to 671; it reads FSTFLLDLFKLTIGMGDLEM. A Selectivity filter motif is present at residues 665–668; the sequence is GMGD. Position 668 (D668) interacts with Ca(2+). Over 672–679 the chain is Extracellular; it reads LESAKYPG. Residues 680–708 form a helical membrane-spanning segment; that stretch reads VFIILLVTYIILTFVLLLNMLIALMGETV. The Cytoplasmic segment spans residues 709–852; sequence GQVSKESKHI…RHGQTPSSPL (144 aa).

Belongs to the transient receptor (TC 1.A.4) family. TrpV subfamily. TRPV4 sub-subfamily. In terms of assembly, homotetramer. Interacts with Ca(2+)-calmodulin.

The protein resides in the apical cell membrane. Its subcellular location is the cell junction. It localises to the adherens junction. It catalyses the reaction Ca(2+)(in) = Ca(2+)(out). Its activity is regulated as follows. ATP binding enhances channel sensitivity to agonists. Ca(2+)-calmodulin prevents the ATP-mediated increased sensitivity to agonists. Non-selective calcium permeant cation channel involved in osmotic sensitivity and mechanosensitivity. Activation by exposure to hypotonicity within the physiological range exhibits an outward rectification. Also activated by phorbol esters. Channel activity seems to be regulated by a calmodulin-dependent mechanism. This Gallus gallus (Chicken) protein is Transient receptor potential cation channel subfamily V member 4 (TRPV4).